The following is a 233-amino-acid chain: Transcriptional regulatory protein NatR (233 aa).

The region spanning 3 to 117 (KVGLVDDYRV…RLAASFDRYL (115 aa)) is the Response regulatory domain. Asp54 is subject to 4-aspartylphosphate. Residues 129-233 (ILIKQKSEMH…QLDYFQNYYF (105 aa)) form the HTH LytTR-type domain.

Post-translationally, phosphorylated by NatK.

Its subcellular location is the cytoplasm. In terms of biological role, member of the two-component regulatory system NatK/NatR that positively regulates the expression of the natAB operon. Acts by binding directly to the promoter of natAB. In Bacillus subtilis (strain 168), this protein is Transcriptional regulatory protein NatR.